Consider the following 336-residue polypeptide: UPF0324 membrane protein lp_2841 (336 aa).

9 consecutive transmembrane segments (helical) span residues 5 to 22 (GILP…ISQG), 26 to 48 (FVPA…NTFL), 84 to 106 (IGGF…ALWL), 116 to 138 (VRML…IAPV), 150 to 172 (ITLV…MAVF), 204 to 226 (TVQF…VLIF), 255 to 277 (WYVA…AIIG), 282 to 304 (TISS…LVNF), and 311 to 333 (LALY…ITLL).

Belongs to the UPF0324 family.

It localises to the cell membrane. The polypeptide is UPF0324 membrane protein lp_2841 (Lactiplantibacillus plantarum (strain ATCC BAA-793 / NCIMB 8826 / WCFS1) (Lactobacillus plantarum)).